The following is a 127-amino-acid chain: Large ribosomal subunit protein bL12 (127 aa).

The protein belongs to the bacterial ribosomal protein bL12 family. Homodimer. Part of the ribosomal stalk of the 50S ribosomal subunit. Forms a multimeric L10(L12)X complex, where L10 forms an elongated spine to which 2 to 4 L12 dimers bind in a sequential fashion. Binds GTP-bound translation factors.

Forms part of the ribosomal stalk which helps the ribosome interact with GTP-bound translation factors. Is thus essential for accurate translation. The sequence is that of Large ribosomal subunit protein bL12 from Rhizobium etli (strain CIAT 652).